Here is a 423-residue protein sequence, read N- to C-terminus: CinA-like protein (423 aa).

This sequence belongs to the CinA family.

This Chlorobaculum tepidum (strain ATCC 49652 / DSM 12025 / NBRC 103806 / TLS) (Chlorobium tepidum) protein is CinA-like protein.